The sequence spans 141 residues: Galactose-6-phosphate isomerase subunit LacA (141 aa).

The protein belongs to the LacAB/RpiB family. Heteromultimeric protein consisting of LacA and LacB.

The catalysed reaction is aldehydo-D-galactose 6-phosphate = keto-D-tagatose 6-phosphate. It participates in carbohydrate metabolism; D-galactose 6-phosphate degradation; D-tagatose 6-phosphate from D-galactose 6-phosphate: step 1/1. The sequence is that of Galactose-6-phosphate isomerase subunit LacA from Streptococcus pneumoniae (strain P1031).